Here is a 392-residue protein sequence, read N- to C-terminus: NADH dehydrogenase-like protein YjlD (392 aa).

This sequence belongs to the NADH dehydrogenase family. FAD serves as cofactor.

This Bacillus subtilis (strain 168) protein is NADH dehydrogenase-like protein YjlD (yjlD).